Here is a 162-residue protein sequence, read N- to C-terminus: Caveolin-2 (162 aa).

The Cytoplasmic portion of the chain corresponds to 1 to 86; the sequence is MGLEKEKLEC…FELVKFIFYR (86 aa). The helical intramembrane region spans 87–107; sequence LLTTLLAVPAAFILGVVFGVL. Residues 108 to 162 lie on the Cytoplasmic side of the membrane; that stretch reads SCIHIWLVMPVTRSFLMLLPSIQVVWKSVTDMFITPLFHSMGRSLSSIQVRTSDT.

It belongs to the caveolin family. As to quaternary structure, homooligomer.

It localises to the golgi apparatus membrane. It is found in the cell membrane. The protein resides in the membrane. Its subcellular location is the caveola. Its function is as follows. May act as a scaffolding protein within caveolar membranes. Interacts directly with G-protein alpha subunits and can functionally regulate their activity. This is Caveolin-2 (cav2) from Takifugu rubripes (Japanese pufferfish).